The sequence spans 277 residues: Large ribosomal subunit protein uL2 (277 aa).

Disordered regions lie at residues 34-55 (LQPL…RHHG) and 213-277 (WKGI…RKKK).

The protein belongs to the universal ribosomal protein uL2 family. Part of the 50S ribosomal subunit. Forms a bridge to the 30S subunit in the 70S ribosome.

In terms of biological role, one of the primary rRNA binding proteins. Required for association of the 30S and 50S subunits to form the 70S ribosome, for tRNA binding and peptide bond formation. It has been suggested to have peptidyltransferase activity; this is somewhat controversial. Makes several contacts with the 16S rRNA in the 70S ribosome. This is Large ribosomal subunit protein uL2 from Staphylococcus haemolyticus (strain JCSC1435).